The primary structure comprises 372 residues: Serine protease inhibitor 42Dd (372 aa).

An N-terminal signal peptide occupies residues 1-15 (MYYLCIFLWVTSVAC). Residues asparagine 197 and asparagine 232 are each glycosylated (N-linked (GlcNAc...) asparagine).

Belongs to the serpin family. Expressed in the ovary.

The protein localises to the secreted. Serine protease inhibitor with activity toward trypsin. Involved in innate immunity to fungal infection by negatively regulating the Toll signaling pathway and suppressing the expression of the antifungal peptide drosomycin. Acts upstream of SPE and grass, and downstream of the fungal cell wall pattern recognition receptor GNBP3. May function specifically in the GNBP3-dependent beta-1,3-glucan branch of the Toll pathway. The sequence is that of Serine protease inhibitor 42Dd from Drosophila melanogaster (Fruit fly).